Here is a 251-residue protein sequence, read N- to C-terminus: uncharacterized protein (251 aa).

The region spanning 3 to 118 (KVVICDDERI…QLEHILDILV (116 aa)) is the Response regulatory domain. 4-aspartylphosphate is present on Asp-55. The HTH araC/xylS-type domain maps to 152–249 (NQILSQIKQH…HMSPSDYNKL (98 aa)). 2 DNA-binding regions (H-T-H motif) span residues 169 to 190 (LDLINPIVVSESYAMRTFKEHV) and 216 to 239 (HYEIAEKVGFSEYKMFCYHFKKYL).

Post-translationally, phosphorylated by SE_0166.

Its subcellular location is the cytoplasm. In terms of biological role, probable member of the two-component regulatory system SE_0166/SE_0165. This is an uncharacterized protein from Staphylococcus epidermidis (strain ATCC 12228 / FDA PCI 1200).